The sequence spans 1164 residues: Protein PLASTID MOVEMENT IMPAIRED 1-RELATED 1 (1164 aa).

A disordered region spans residues 30–54 (KNPRGSVAGSNKTPTKPLSRSNLAE). The span at 37–51 (AGSNKTPTKPLSRSN) shows a compositional bias: polar residues. The 149-residue stretch at 69–217 (INHVRNRRFN…TLSMSFGYTV (149 aa)) folds into the C2 NT-type domain. Positions 224–263 (PASSGSTQNFRSSSNVKQTSNNTGLTRAISAKSSLGNGKS) are enriched in polar residues. Disordered stretches follow at residues 224 to 268 (PASS…SRRY), 466 to 486 (APEE…PKDA), 1038 to 1063 (SELK…PMEE), and 1124 to 1164 (GSAK…IMPK). Composition is skewed to basic and acidic residues over residues 469–486 (EGNK…PKDA) and 1052–1062 (SDAKKEEKPME).

The protein localises to the cytoplasm. Together with PMI1, necessary for chloroplast and nuclear photorelocation movements via the regulation of chloroplast-actin (cp-actin) filaments in pavement cells. The sequence is that of Protein PLASTID MOVEMENT IMPAIRED 1-RELATED 1 from Arabidopsis thaliana (Mouse-ear cress).